The chain runs to 316 residues: Oligopeptide transport system permease protein AppB (316 aa).

Transmembrane regions (helical) follow at residues 10–30 (LMSIPILLGITILSFVIMKAA), 100–120 (LLLMLVSTILALMISIPFGVL), 138–158 (FIGLAIPNFWFGLILIMVLSV), 177–197 (IFDRIHHLILPAFVLATADMA), 240–260 (LPVITIFGLMIPSFIGGSVVV), and 290–310 (VISAVLVVVGNLIADILYAIV). Residues 96–303 (LPNTLLLMLV…VLVVVGNLIA (208 aa)) form the ABC transmembrane type-1 domain.

This sequence belongs to the binding-protein-dependent transport system permease family. OppBC subfamily.

The protein localises to the cell membrane. Its function is as follows. This protein is a component of an oligopeptide permease, a binding protein-dependent transport system. This APP system can completely substitute for the OPP system in both sporulation and genetic competence, though, unlike OPP, is incapable of transporting tripeptides. Probably responsible for the translocation of the substrate across the membrane. The protein is Oligopeptide transport system permease protein AppB (appB) of Bacillus subtilis (strain 168).